The following is a 222-amino-acid chain: Peptidyl-prolyl cis-trans isomerase FKBP7 (222 aa).

An N-terminal signal peptide occupies residues 1–23 (MPKTMHFLFRFIVFFYLWGLFTA). Asn45 carries N-linked (GlcNAc...) asparagine glycosylation. Positions 53 to 145 (GDLLNAHYDG…IFEIELYAVT (93 aa)) constitute a PPIase FKBP-type domain. 2 EF-hand domains span residues 145 to 180 (TKGP…EFEK) and 189 to 222 (YQDA…HDEL). Positions 158, 160, 162, 164, 169, 202, 204, 206, and 213 each coordinate Ca(2+). Positions 219-222 (HDEL) match the Prevents secretion from ER motif.

In terms of processing, glycosylated.

The protein localises to the endoplasmic reticulum lumen. The enzyme catalyses [protein]-peptidylproline (omega=180) = [protein]-peptidylproline (omega=0). PPIases accelerate the folding of proteins during protein synthesis. The protein is Peptidyl-prolyl cis-trans isomerase FKBP7 (FKBP7) of Pongo abelii (Sumatran orangutan).